The chain runs to 334 residues: MDSMKRFYFFALSILLILALIIWMGPSRIIRAVYMADWMIIAIALLIHMGVLAVRGLRWGFIIGQPWRMRVNFMVKTIGLFAGNLSPMRSAGEVMNALAGKKLNGIELSEGLSAGLTERFFDLGIGGGLLLLAAVMVPVIRVIALFGAILSVLITYLIYLVNWREEKGLRIYQRIHSIIERLPVSEETLENLYERLTSGIKGMIGYTRSYSNFTSLGVIFILSLLSWLMECLRLYLVFMAFGVETSFSAVIIIFLLANLVGILSALPGGMGSMEVSMAGLFVVFGVPGFLAGSIALVDRIISFWMVTALGAIFSSCYAGEIFDEVRSYILDIRA.

Transmembrane regions (helical) follow at residues 7–27, 33–53, 120–140, 142–162, 218–238, 247–267, 277–297, and 300–320; these read FYFF…MGPS, VYMA…GVLA, FFDL…VPVI, VIAL…YLVN, VIFI…YLVF, FSAV…SALP, MAGL…IALV, and IISF…YAGE.

It belongs to the UPF0104 family.

The protein localises to the cell membrane. In Methanothermobacter thermautotrophicus (strain ATCC 29096 / DSM 1053 / JCM 10044 / NBRC 100330 / Delta H) (Methanobacterium thermoautotrophicum), this protein is UPF0104 membrane protein MTH_378.